Reading from the N-terminus, the 176-residue chain is Isopentenyl-diphosphate Delta-isomerase 1 (176 aa).

Mn(2+) is bound by residues His-23 and His-30. Residues 28–162 (HLHRAFSCFI…EEFCTPWFKK (135 aa)) form the Nudix hydrolase domain. Residue Cys-65 is part of the active site. Cys-65 lines the Mg(2+) pocket. Mn(2+) is bound at residue His-67. Glu-85 lines the Mg(2+) pocket. Mn(2+) contacts are provided by Glu-112 and Glu-114. Glu-114 is a catalytic residue.

The protein belongs to the IPP isomerase type 1 family. Homodimer. It depends on Mg(2+) as a cofactor. Mn(2+) serves as cofactor.

The protein resides in the cytoplasm. It catalyses the reaction isopentenyl diphosphate = dimethylallyl diphosphate. It participates in isoprenoid biosynthesis; dimethylallyl diphosphate biosynthesis; dimethylallyl diphosphate from isopentenyl diphosphate: step 1/1. Functionally, catalyzes the 1,3-allylic rearrangement of the homoallylic substrate isopentenyl (IPP) to its highly electrophilic allylic isomer, dimethylallyl diphosphate (DMAPP). The chain is Isopentenyl-diphosphate Delta-isomerase 1 from Photorhabdus laumondii subsp. laumondii (strain DSM 15139 / CIP 105565 / TT01) (Photorhabdus luminescens subsp. laumondii).